The sequence spans 337 residues: Eukaryotic translation initiation factor 3 subunit H (337 aa).

One can recognise an MPN domain in the interval Val25 to Phe158. Ser178 is subject to Phosphoserine; by ATPK1. The segment covering Arg267 to Gly278 has biased composition (basic and acidic residues). Positions Arg267–Pro290 are disordered.

The protein belongs to the eIF-3 subunit H family. As to quaternary structure, component of the eukaryotic translation initiation factor 3 (eIF-3) complex. Interacts directly with TIF3A1, TIF3B1, TIF3C1, TIF3E1 and TIF3F1. Associates with the CSN (COP9 signalosome) complex. Binds to CSN1, CSN7 and CSN8. Interacts with ATPK1. In response to auxin (NAA), phosphorylated at Ser-178 by ATPK1 and binds to polysomes via TOR signaling. This phosphorylation is repressed by Torin-1. As to expression, mostly expressed in roots and flowers, and, to a lower extent, in leaves, stems and siliques.

It localises to the cytoplasm. In terms of biological role, component of the eukaryotic translation initiation factor 3 (eIF-3) complex, which is involved in protein synthesis of a specialized repertoire of mRNAs and, together with other initiation factors, stimulates binding of mRNA and methionyl-tRNAi to the 40S ribosome. The eIF-3 complex specifically targets and initiates translation of a subset of mRNAs involved in cell proliferation (Potential). Regulates translation initiation of specific 5' mRNAs harboring multiple upstream open reading frames (uORFs) in their 5' leader sequence (e.g. BETA-OHASE 2 and LHY). This is Eukaryotic translation initiation factor 3 subunit H (TIF3H1) from Arabidopsis thaliana (Mouse-ear cress).